The primary structure comprises 802 residues: Homeobox-leucine zipper protein ANTHOCYANINLESS 2 (802 aa).

Positions 71–143 are disordered; the sequence is QPERGTNRGE…RKKRYHRHTP (73 aa). Residues 103 to 113 are compositionally biased toward basic and acidic residues; sequence RSREEEHESRS. A compositionally biased stretch (basic residues) spans 133-142; that stretch reads PRKKRYHRHT. Positions 134-193 form a DNA-binding region, homeobox; that stretch reads RKKRYHRHTPQQIQELESMFKECPHPDEKQRLELSKRLCLETRQVKFWFQNRRTQMKTQL. A coiled-coil region spans residues 182–221; it reads FQNRRTQMKTQLERHENALLRQENDKLRAENMSIREAMRN. The 232-residue stretch at 315-546 folds into the START domain; the sequence is GIDQKSVLLE…LQRQCECLAI (232 aa).

Belongs to the HD-ZIP homeobox family. Class IV subfamily. In terms of assembly, interacts with AIL7/PLT7, ANT, BBM and AIL1. As to expression, expressed in roots, stems, leaves and floral buds.

The protein resides in the nucleus. Functionally, probable transcription factor involved in the regulation of the tissue-specific accumulation of anthocyanins and in cellular organization of the primary root. This is Homeobox-leucine zipper protein ANTHOCYANINLESS 2 from Arabidopsis thaliana (Mouse-ear cress).